Reading from the N-terminus, the 88-residue chain is N(2)-fixation sustaining protein CowN (88 aa).

Belongs to the CowN family.

In terms of biological role, is required to sustain N(2)-dependent growth in the presence of low levels of carbon monoxide (CO). Probably acts by protecting the N(2) fixation ability of the nitrogenase complex, which is inactivated in the presence of CO. This chain is N(2)-fixation sustaining protein CowN, found in Rhodomicrobium vannielii (strain ATCC 17100 / DSM 162 / LMG 4299 / NCIMB 10020 / ATH 3.1.1).